The following is a 948-amino-acid chain: UvrABC system protein A (948 aa).

33–40 (GLSGSGKS) contacts ATP. A C4-type zinc finger spans residues 252–279 (CPICGFSIGELEPRMFSFNSPFGACPTC). 2 consecutive ABC transporter domains span residues 309 to 587 (WIPT…KKSL) and 607 to 935 (ASDR…KYLK). Residue 639-646 (GVSGSGKS) participates in ATP binding. Residues 738 to 764 (CEACKGDGIIKIEMHFLPDVYVPCEVC) form a C4-type zinc finger.

Belongs to the ABC transporter superfamily. UvrA family. As to quaternary structure, forms a heterotetramer with UvrB during the search for lesions.

It localises to the cytoplasm. In terms of biological role, the UvrABC repair system catalyzes the recognition and processing of DNA lesions. UvrA is an ATPase and a DNA-binding protein. A damage recognition complex composed of 2 UvrA and 2 UvrB subunits scans DNA for abnormalities. When the presence of a lesion has been verified by UvrB, the UvrA molecules dissociate. The polypeptide is UvrABC system protein A (Staphylococcus aureus (strain MRSA252)).